We begin with the raw amino-acid sequence, 70 residues long: V-type proton ATPase subunit e1 (70 aa).

2 consecutive transmembrane segments (helical) span residues methionine 1–valine 21 and leucine 36–alanine 56.

This sequence belongs to the V-ATPase e1/e2 subunit family. As to quaternary structure, V-ATPase is a heteromultimeric enzyme composed of a peripheral catalytic V1 complex (components A to H) attached to an integral membrane V0 proton pore complex (components: a, c, c'', d and e).

The protein resides in the golgi apparatus. Its subcellular location is the trans-Golgi network membrane. Its function is as follows. Subunit of the integral membrane V0 complex of vacuolar ATPase. V-ATPase is responsible for acidifying a variety of intracellular compartments in eukaryotic cells. The polypeptide is V-type proton ATPase subunit e1 (VHA-e1) (Arabidopsis thaliana (Mouse-ear cress)).